Reading from the N-terminus, the 536-residue chain is Phosphoenolpyruvate carboxykinase (ATP) (536 aa).

3 residues coordinate substrate: Arg-62, Tyr-203, and Lys-209. ATP-binding positions include Lys-209, His-228, and 244–252 (GLSGTGKTT). Residues Lys-209 and His-228 each contribute to the Mn(2+) site. Asp-265 lines the Mn(2+) pocket. ATP is bound by residues Glu-293, Arg-329, 445 to 446 (RI), and Thr-451. Arg-329 contributes to the substrate binding site.

This sequence belongs to the phosphoenolpyruvate carboxykinase (ATP) family. In terms of assembly, monomer. It depends on Mn(2+) as a cofactor.

It localises to the cytoplasm. The catalysed reaction is oxaloacetate + ATP = phosphoenolpyruvate + ADP + CO2. It functions in the pathway carbohydrate biosynthesis; gluconeogenesis. In terms of biological role, involved in the gluconeogenesis. Catalyzes the conversion of oxaloacetate (OAA) to phosphoenolpyruvate (PEP) through direct phosphoryl transfer between the nucleoside triphosphate and OAA. The polypeptide is Phosphoenolpyruvate carboxykinase (ATP) (Actinobacillus pleuropneumoniae serotype 7 (strain AP76)).